A 177-amino-acid polypeptide reads, in one-letter code: Shikimate kinase (177 aa).

Residue 17–22 (GAGKST) coordinates ATP. A Mg(2+)-binding site is contributed by serine 21. 3 residues coordinate substrate: aspartate 39, arginine 63, and glycine 85. Arginine 123 contributes to the ATP binding site. Arginine 142 provides a ligand contact to substrate. Arginine 160 is an ATP binding site.

The protein belongs to the shikimate kinase family. Monomer. The cofactor is Mg(2+).

The protein resides in the cytoplasm. The enzyme catalyses shikimate + ATP = 3-phosphoshikimate + ADP + H(+). It participates in metabolic intermediate biosynthesis; chorismate biosynthesis; chorismate from D-erythrose 4-phosphate and phosphoenolpyruvate: step 5/7. Its function is as follows. Catalyzes the specific phosphorylation of the 3-hydroxyl group of shikimic acid using ATP as a cosubstrate. This is Shikimate kinase from Halorhodospira halophila (strain DSM 244 / SL1) (Ectothiorhodospira halophila (strain DSM 244 / SL1)).